The sequence spans 475 residues: Equilibrative nucleoside transporter 3 (475 aa).

A disordered region spans residues 1 to 24; it reads MAVVSEDDFQHSSNSTYRTTSSSL. Residues 1–53 are Cytoplasmic-facing; that stretch reads MAVVSEDDFQHSSNSTYRTTSSSLRADQEALLEKLLDRPPPGLQRPEDRFCGT. A compositionally biased stretch (low complexity) spans 12 to 23; it reads SSNSTYRTTSSS. Residues S21 and S23 each carry the phosphoserine modification. Residues 31–32 carry the Dileucine internalization motif motif; it reads LL. A helical transmembrane segment spans residues 54 to 74; it reads YIIFFSLGIGSLLPWNFFITA. Topologically, residues 75–105 are extracellular; sequence KEYWMFKLRNSSSPATGEDPEGSDILNYFES. N84 is a glycosylation site (N-linked (GlcNAc...) asparagine). A helical membrane pass occupies residues 106–126; the sequence is YLAVASTVPSMLCLVANFLLV. The Cytoplasmic portion of the chain corresponds to 127–134; it reads NRVAVHIR. Residues 135–155 traverse the membrane as a helical segment; the sequence is VLASLTVILAIFMVITALVKV. The Extracellular segment spans residues 156-162; sequence DTSSWTR. A helical membrane pass occupies residues 163-183; it reads GFFAVTIVCMVILSGASTVFS. The Cytoplasmic segment spans residues 184–199; the sequence is SSIYGMTGSFPMRNSQ. The chain crosses the membrane as a helical span at residues 200-220; the sequence is ALISGGAMGGTVSAVASLVDL. Topologically, residues 221–230 are extracellular; sequence AASSDVRNSA. Residues 231 to 251 traverse the membrane as a helical segment; it reads LAFFLTATVFLVLCMGLYLLL. The Cytoplasmic portion of the chain corresponds to 252–305; that stretch reads SRLEYARYYMRPVLAAHVFSGEEELPQDSLSAPSVASRFIDSHTPPLRPILKKT. The chain crosses the membrane as a helical span at residues 306–326; it reads ASLGFCVTYVFFITSLIYPAI. At 327 to 337 the chain is on the extracellular side; the sequence is CTNIESLNKGS. Residues 338–358 form a helical membrane-spanning segment; that stretch reads GSLWTTKFFIPLTTFLLYNFA. Topologically, residues 359–377 are cytoplasmic; the sequence is DLCGRQLTAWIQVPGPNSK. The chain crosses the membrane as a helical span at residues 378–398; sequence ALPGFVLLRTCLIPLFVLCNY. At 399–415 the chain is on the extracellular side; it reads QPRVHLKTVVFQSDVYP. A helical membrane pass occupies residues 416–436; that stretch reads ALLSSLLGLSNGYLSTLALLY. At 437-454 the chain is on the cytoplasmic side; it reads GPKIVPRELAEATGVVMS. Residues 455–475 form a helical membrane-spanning segment; the sequence is FYVCLGLTLGSACSTLLVHLI.

The protein belongs to the SLC29A/ENT transporter (TC 2.A.57) family. In terms of tissue distribution, widely expressed in both adult and fetal tissues. Highest levels in placenta, uterus, ovary, spleen, lymph node and bone marrow. Expressed in liver. Lowest levels in brain and heart. Expressed in macrophages.

The protein resides in the lysosome membrane. It is found in the late endosome membrane. Its subcellular location is the mitochondrion membrane. It localises to the cell membrane. It catalyses the reaction adenosine(in) = adenosine(out). The enzyme catalyses guanosine(in) = guanosine(out). The catalysed reaction is inosine(in) = inosine(out). It carries out the reaction uridine(out) = uridine(in). It catalyses the reaction cytidine(in) = cytidine(out). The enzyme catalyses thymidine(in) = thymidine(out). The catalysed reaction is 2'-deoxyadenosine(in) = 2'-deoxyadenosine(out). It carries out the reaction 2'-deoxycytidine(in) = 2'-deoxycytidine(out). It catalyses the reaction guanine(out) = guanine(in). The enzyme catalyses uracil(in) = uracil(out). The catalysed reaction is (R)-noradrenaline(out) = (R)-noradrenaline(in). It carries out the reaction dopamine(out) = dopamine(in). It catalyses the reaction serotonin(out) = serotonin(in). The enzyme catalyses tyramine(in) = tyramine(out). The catalysed reaction is ATP(in) = ATP(out). Its function is as follows. Uniporter that mediates the facilitative transport of nucleoside across lysosomal and mitochondrial membranes. Functions as a non-electrogenic Na(+)-independent transporter. Substrate transport is pH-dependent and enhanced under acidic condition, probably reflecting the location of the transporter in acidic intracellular compartments. Proton is not a cotransporting ion but most likely change the ionization state of the transporter which dictates transport-permissible/impermissible conformation for nucleoside translocation. May direct the nucleoside transport from lysosomes to cytosol or cytosol to mitochondria to facilitate the fundamental function of salvage synthesis of nucleic acids. Involved in the transport of nucleosides (adenosine, guanosine, uridine, thymidine, cytidine and inosine) and deoxynucleosides (deoxyadenosine, deoxycytidine). Also mediates transport of purine nucleobases (adenine, guanine) and pyrimidine nucleobases (uracil). Also able to transport monoamine neurotransmitters dopamine, serotonin, noradrenaline and tyramine. Capable of transporting ATP. Mediates nucleoside export from lysosomes in macrophages, which regulates macrophage functions and numbers. This Homo sapiens (Human) protein is Equilibrative nucleoside transporter 3.